The primary structure comprises 368 residues: F-box protein At3g17710 (368 aa).

Residues 1–46 (MASVKLPWDLEEEILSRLPPRSLVRFRTVCKHWNGLFSDKRFVKKH) form the F-box domain.

This chain is F-box protein At3g17710, found in Arabidopsis thaliana (Mouse-ear cress).